We begin with the raw amino-acid sequence, 557 residues long: Protein PECTIC ARABINOGALACTAN SYNTHESIS-RELATED (557 aa).

The interval 1–54 (MAELRHSSSLGSRSSSSPLRAAGDEDSSSPHVHDHSPNGGDDEDGRPRHPSRDR) is disordered. Over 1–79 (MAELRHSSSL…DPRVSPQKNK (79 aa)) the chain is Cytoplasmic. Over residues 7–20 (SSSLGSRSSSSPLR) the composition is skewed to low complexity. Residues 45–54 (GRPRHPSRDR) show a composition bias toward basic and acidic residues. Residues 80–100 (ISLLLILILAIASLISVYGII) form a helical; Signal-anchor for type II membrane protein membrane-spanning segment. Residues 101–557 (NHLNAPYLCK…NPLTPCMCKA (457 aa)) are Lumenal-facing. Asn156, Asn188, and Asn324 each carry an N-linked (GlcNAc...) asparagine glycan. 336–338 (HLR) contacts substrate. An N-linked (GlcNAc...) asparagine glycan is attached at Asn375.

This sequence belongs to the glycosyltransferase GT106 family. In terms of tissue distribution, widely expressed with the highest expression in reproductive tissues and roots.

It localises to the golgi apparatus membrane. It functions in the pathway glycan metabolism; pectin biosynthesis. Functionally, glycosyltransferase involved in the biosynthesis of pectic type-II arabinogalactans. This Arabidopsis thaliana (Mouse-ear cress) protein is Protein PECTIC ARABINOGALACTAN SYNTHESIS-RELATED.